Here is a 323-residue protein sequence, read N- to C-terminus: AA9 family lytic polysaccharide monooxygenase A (323 aa).

Positions 1–19 (MKSFISLLGLSFLTCHASA) are cleaved as a signal peptide. Residues His20 and His90 each contribute to the Cu(2+) site. Residues Cys59 and Cys175 are joined by a disulfide bond. Residues His161 and Gln170 each coordinate O2. Tyr172 lines the Cu(2+) pocket. N-linked (GlcNAc...) asparagine glycosylation is present at Asn215. Residues 287–323 (AVVQKFGQCGGQGWTGGTTCVAGSTCTATNAYYSQCL) form the CBM1 domain.

This sequence belongs to the polysaccharide monooxygenase AA9 family. Cu(2+) is required as a cofactor.

It is found in the secreted. The catalysed reaction is [(1-&gt;4)-beta-D-glucosyl]n+m + reduced acceptor + O2 = 4-dehydro-beta-D-glucosyl-[(1-&gt;4)-beta-D-glucosyl]n-1 + [(1-&gt;4)-beta-D-glucosyl]m + acceptor + H2O.. Its function is as follows. Lytic polysaccharide monooxygenase (LPMO) that depolymerizes crystalline and amorphous polysaccharides via the oxidation of scissile alpha- or beta-(1-4)-glycosidic bonds, yielding C1 and C4 oxidation products. Catalysis by LPMOs requires the reduction of the active-site copper from Cu(II) to Cu(I) by a reducing agent and H(2)O(2) or O(2) as a cosubstrate. The chain is AA9 family lytic polysaccharide monooxygenase A from Botryotinia fuckeliana (strain B05.10) (Noble rot fungus).